We begin with the raw amino-acid sequence, 359 residues long: MASLFDKNSFQMTRLQKTAVAKVVGVSLIMLLAACSSDQRYKRQVSGDEAYLDASGLHELKAPVGMILPVQNGTYEVQAGSMQGAVGKQLDIRPPSQPLALLSGSQTQFSGNSSTVLLENTAQNRDLWNNVVKAVEQNNFKIANRDDANQTLTTDFVDWNRADEDFQYQGRYQISVKQQSYQLALTVKTLELKQQDKPVTSSAEIQRYNSQMMNAITANLDKVQQDTQARLDNRRVGEIDVQSGADDTGLPVLIVRESYGVVWDRLPNALTKVGMKVTDSSRPQGTLSVTYKPLNDDAWQTLGAKDPGLTSGDYKLQVGDLDNRSSLQFLDPKGHALSQSQNDAMVAVMQAAFSQSNAK.

An N-terminal signal peptide occupies residues 1 to 34; that stretch reads MASLFDKNSFQMTRLQKTAVAKVVGVSLIMLLAA. Residue C35 is the site of N-palmitoyl cysteine attachment. Residue C35 is the site of S-diacylglycerol cysteine attachment.

This sequence belongs to the BamC family. Part of the Bam complex, which is composed of the outer membrane protein BamA, and four lipoproteins BamB, BamC, BamD and BamE.

It is found in the cell outer membrane. Functionally, part of the outer membrane protein assembly complex, which is involved in assembly and insertion of beta-barrel proteins into the outer membrane. This is Outer membrane protein assembly factor BamC from Rahnella sp. (strain Y9602).